Consider the following 335-residue polypeptide: Nonaprenyl diphosphate synthase (335 aa).

Isopentenyl diphosphate is bound by residues Lys57, Arg60, and His90. Mg(2+) is bound by residues Asp97 and Asp101. Residues Asp97 to Asp101 carry the DDXXD motif motif. Isopentenyl diphosphate is bound at residue Arg107. The short motif at Asp223–Asp227 is the DDXXD motif element.

This sequence belongs to the FPP/GGPP synthase family. The cofactor is Mg(2+).

The catalysed reaction is isopentenyl diphosphate + (2E)-geranyl diphosphate = (2E,6E)-farnesyl diphosphate + diphosphate. It carries out the reaction isopentenyl diphosphate + (2E,6E)-farnesyl diphosphate = (2E,6E,10E)-geranylgeranyl diphosphate + diphosphate. It catalyses the reaction 5 isopentenyl diphosphate + (2E,6E,10E)-geranylgeranyl diphosphate = all-trans-nonaprenyl diphosphate + 5 diphosphate. The protein operates within isoprenoid biosynthesis; farnesyl diphosphate biosynthesis; farnesyl diphosphate from geranyl diphosphate and isopentenyl diphosphate. It participates in isoprenoid biosynthesis; geranylgeranyl diphosphate biosynthesis; geranylgeranyl diphosphate from farnesyl diphosphate and isopentenyl diphosphate: step 1/1. In terms of biological role, catalyzes the sequential condensations of isopentenyl pyrophosphate (IPP) with geranyl diphosphate (GPP) to yield (2E,6E)-farnesyl diphosphate (E,E-FPP), with E,E-FPP to yield geranylgeranyl diphosphate (GGPP) and with GGPP to yield nonaprenyl diphosphate. May also have weak activity with dimethylallyl diphosphate (DMAPP). The protein is Nonaprenyl diphosphate synthase of Mycobacterium tuberculosis (strain ATCC 25618 / H37Rv).